The following is a 602-amino-acid chain: Elongation factor 4 (602 aa).

The 183-residue stretch at 7 to 189 folds into the tr-type G domain; the sequence is KYIRNFSIVA…AIVNKVPAPD (183 aa). Residues 19 to 24 and 136 to 139 each bind GTP; these read DHGKST and NKID.

Belongs to the TRAFAC class translation factor GTPase superfamily. Classic translation factor GTPase family. LepA subfamily.

It is found in the cell membrane. It carries out the reaction GTP + H2O = GDP + phosphate + H(+). Required for accurate and efficient protein synthesis under certain stress conditions. May act as a fidelity factor of the translation reaction, by catalyzing a one-codon backward translocation of tRNAs on improperly translocated ribosomes. Back-translocation proceeds from a post-translocation (POST) complex to a pre-translocation (PRE) complex, thus giving elongation factor G a second chance to translocate the tRNAs correctly. Binds to ribosomes in a GTP-dependent manner. The protein is Elongation factor 4 of Clostridium botulinum (strain ATCC 19397 / Type A).